The chain runs to 208 residues: NAD(P)H dehydrogenase (quinone) (208 aa).

The Flavodoxin-like domain maps to 4 to 199 (VNVIFHSIHG…AMARYQGRHV (196 aa)). Residues 10–15 (SIHGHT) and 87–89 (TRY) each bind FMN. Trp107 lines the substrate pocket. FMN is bound by residues 122 to 128 (SSGTQHG) and His143.

It belongs to the WrbA family. FMN serves as cofactor.

The enzyme catalyses a quinone + NADH + H(+) = a quinol + NAD(+). The catalysed reaction is a quinone + NADPH + H(+) = a quinol + NADP(+). The sequence is that of NAD(P)H dehydrogenase (quinone) from Methanosarcina barkeri (strain Fusaro / DSM 804).